Here is a 111-residue protein sequence, read N- to C-terminus: SPbeta prophage-derived uncharacterized protein YolC (111 aa).

An N-terminal signal peptide occupies residues 1-25 (MKKRLIGFLVLVPALIMSGITLIEA).

The polypeptide is SPbeta prophage-derived uncharacterized protein YolC (yolC) (Bacillus subtilis (strain 168)).